We begin with the raw amino-acid sequence, 559 residues long: 5-epiaristolochene synthase (559 aa).

Residues D312, D316, D455, T459, and E463 each coordinate Mg(2+). Positions 312-316 (DDTYD) match the DDXXD motif motif.

The protein belongs to the terpene synthase family. In terms of assembly, monomer. Mg(2+) is required as a cofactor. As to expression, expressed only in treated leaves an not detected in control leaves.

The protein localises to the cytoplasm. It carries out the reaction (2E,6E)-farnesyl diphosphate = (+)-5-epi-aristolochene + diphosphate. Its pathway is secondary metabolite biosynthesis; terpenoid biosynthesis. Functionally, catalyzes the cyclization of trans,trans-farnesyl diphosphate (FPP) to the bicyclic intermediate 5-epi-aristolochene, initial step in the conversion of FPP to the sesquiterpenoid antifungal phytoalexin capsidiol. Produces germacrene A as an enzyme-bound intermediate that is not released by the enzyme, but is further cyclized to produce the bicyclic 5-epi-aristolochene. The sequence is that of 5-epiaristolochene synthase (EAS) from Capsicum annuum (Capsicum pepper).